The following is a 560-amino-acid chain: Dihydroxy-acid dehydratase (560 aa).

Asp78 is a Mg(2+) binding site. Cys119 serves as a coordination point for [2Fe-2S] cluster. Mg(2+) is bound by residues Asp120 and Lys121. Position 121 is an N6-carboxylysine (Lys121). Cys192 provides a ligand contact to [2Fe-2S] cluster. Glu446 is a Mg(2+) binding site. The Proton acceptor role is filled by Ser472.

Belongs to the IlvD/Edd family. Homodimer. Requires [2Fe-2S] cluster as cofactor. Mg(2+) serves as cofactor.

It catalyses the reaction (2R)-2,3-dihydroxy-3-methylbutanoate = 3-methyl-2-oxobutanoate + H2O. The enzyme catalyses (2R,3R)-2,3-dihydroxy-3-methylpentanoate = (S)-3-methyl-2-oxopentanoate + H2O. It participates in amino-acid biosynthesis; L-isoleucine biosynthesis; L-isoleucine from 2-oxobutanoate: step 3/4. The protein operates within amino-acid biosynthesis; L-valine biosynthesis; L-valine from pyruvate: step 3/4. Its function is as follows. Functions in the biosynthesis of branched-chain amino acids. Catalyzes the dehydration of (2R,3R)-2,3-dihydroxy-3-methylpentanoate (2,3-dihydroxy-3-methylvalerate) into 2-oxo-3-methylpentanoate (2-oxo-3-methylvalerate) and of (2R)-2,3-dihydroxy-3-methylbutanoate (2,3-dihydroxyisovalerate) into 2-oxo-3-methylbutanoate (2-oxoisovalerate), the penultimate precursor to L-isoleucine and L-valine, respectively. This is Dihydroxy-acid dehydratase from Anaeromyxobacter sp. (strain K).